The following is a 311-amino-acid chain: Methionyl-tRNA formyltransferase (311 aa).

110 to 113 (SLLP) provides a ligand contact to (6S)-5,6,7,8-tetrahydrofolate.

It belongs to the Fmt family.

The enzyme catalyses L-methionyl-tRNA(fMet) + (6R)-10-formyltetrahydrofolate = N-formyl-L-methionyl-tRNA(fMet) + (6S)-5,6,7,8-tetrahydrofolate + H(+). In terms of biological role, attaches a formyl group to the free amino group of methionyl-tRNA(fMet). The formyl group appears to play a dual role in the initiator identity of N-formylmethionyl-tRNA by promoting its recognition by IF2 and preventing the misappropriation of this tRNA by the elongation apparatus. This chain is Methionyl-tRNA formyltransferase, found in Streptococcus pyogenes serotype M18 (strain MGAS8232).